We begin with the raw amino-acid sequence, 243 residues long: DNA repair protein RecO (243 aa).

The protein belongs to the RecO family.

Functionally, involved in DNA repair and RecF pathway recombination. The polypeptide is DNA repair protein RecO (Beutenbergia cavernae (strain ATCC BAA-8 / DSM 12333 / CCUG 43141 / JCM 11478 / NBRC 16432 / NCIMB 13614 / HKI 0122)).